The sequence spans 106 residues: V-type proton ATPase subunit G2 (106 aa).

M1 is modified (N-acetylmethionine). The tract at residues 31-67 is disordered; sequence LKQAKEEAETEVAEHKTSTEQGFQRKLEATSGDSGAN. The span at 33–58 shows a compositional bias: basic and acidic residues; sequence QAKEEAETEVAEHKTSTEQGFQRKLE.

Belongs to the V-ATPase G subunit family. As to quaternary structure, V-ATPase is a heteromultimeric enzyme composed of a peripheral catalytic V1 complex (components A to H) attached to an integral membrane V0 proton pore complex (components: a, c, c'', d and e).

It localises to the vacuole membrane. In terms of biological role, catalytic subunit of the peripheral V1 complex of vacuolar ATPase (V-ATPase). V-ATPase is responsible for acidifying a variety of intracellular compartments in eukaryotic cells. The sequence is that of V-type proton ATPase subunit G2 (VHA-G2) from Arabidopsis thaliana (Mouse-ear cress).